The following is a 171-amino-acid chain: Der GTPase-activating protein YihI (171 aa).

Disordered stretches follow at residues 1-99 (MKKP…QAEL) and 145-171 (LSYD…RGGN). Residues 20–30 (TREELNQEARD) show a composition bias toward basic and acidic residues. Basic residues predominate over residues 31 to 40 (RKRLKKHRGH). Acidic residues predominate over residues 147–160 (YDDDEEDDEEDEKQ).

The protein belongs to the YihI family. As to quaternary structure, interacts with Der.

Its function is as follows. A GTPase-activating protein (GAP) that modifies Der/EngA GTPase function. May play a role in ribosome biogenesis. This chain is Der GTPase-activating protein YihI, found in Salmonella agona (strain SL483).